Here is a 521-residue protein sequence, read N- to C-terminus: Probable methylmalonate-semialdehyde/malonate-semialdehyde dehydrogenase [acylating], mitochondrial (521 aa).

5 residues coordinate NAD(+): Phe172, Lys196, Glu199, Arg200, and Ser249. Residue Cys304 is the Nucleophile of the active site. An NAD(+)-binding site is contributed by Glu404.

This sequence belongs to the aldehyde dehydrogenase family. In terms of assembly, homotetramer.

The protein localises to the mitochondrion. It carries out the reaction 2-methyl-3-oxopropanoate + NAD(+) + CoA + H2O = propanoyl-CoA + hydrogencarbonate + NADH + H(+). The catalysed reaction is 3-oxopropanoate + NAD(+) + CoA + H2O = hydrogencarbonate + acetyl-CoA + NADH + H(+). Functionally, probable malonate and methylmalonate semialdehyde dehydrogenase involved in the catabolism of valine, thymine, and compounds catabolized by way of beta-alanine, including uracil and cytidine. In Aedes aegypti (Yellowfever mosquito), this protein is Probable methylmalonate-semialdehyde/malonate-semialdehyde dehydrogenase [acylating], mitochondrial.